We begin with the raw amino-acid sequence, 154 residues long: uncharacterized protein (154 aa).

Residues 91 to 154 (PSEESWGCRQ…WGSPQPSRGA (64 aa)) form a disordered region. Polar residues predominate over residues 134 to 154 (SRDTSPLGGQSWGSPQPSRGA).

This is an uncharacterized protein from Homo sapiens (Human).